Here is a 366-residue protein sequence, read N- to C-terminus: Phospho-N-acetylmuramoyl-pentapeptide-transferase (366 aa).

Helical transmembrane passes span 3–23 (QIFI…PVLI), 54–74 (GIAV…VGLV), 80–100 (PGVS…LGFA), 120–140 (LVGQ…FPNA), 161–181 (IAIG…YLVI), 197–217 (LASG…FWQF), 238–258 (LSML…WNAA), 262–282 (IFMG…LSVT), 288–308 (LMIL…IQVV), and 341–361 (FWLL…AEWL).

Belongs to the glycosyltransferase 4 family. MraY subfamily. It depends on Mg(2+) as a cofactor.

It is found in the cell membrane. It catalyses the reaction UDP-N-acetyl-alpha-D-muramoyl-L-alanyl-gamma-D-glutamyl-meso-2,6-diaminopimeloyl-D-alanyl-D-alanine + di-trans,octa-cis-undecaprenyl phosphate = di-trans,octa-cis-undecaprenyl diphospho-N-acetyl-alpha-D-muramoyl-L-alanyl-D-glutamyl-meso-2,6-diaminopimeloyl-D-alanyl-D-alanine + UMP. It participates in cell wall biogenesis; peptidoglycan biosynthesis. Functionally, catalyzes the initial step of the lipid cycle reactions in the biosynthesis of the cell wall peptidoglycan: transfers peptidoglycan precursor phospho-MurNAc-pentapeptide from UDP-MurNAc-pentapeptide onto the lipid carrier undecaprenyl phosphate, yielding undecaprenyl-pyrophosphoryl-MurNAc-pentapeptide, known as lipid I. The protein is Phospho-N-acetylmuramoyl-pentapeptide-transferase of Corynebacterium jeikeium (strain K411).